We begin with the raw amino-acid sequence, 396 residues long: Phosphoglycerate kinase (396 aa).

Substrate contacts are provided by residues 21–23 (DFN), R36, 59–62 (HLGK), R119, and R156. Residues K206, E325, and 352-355 (GGDS) each bind ATP.

Belongs to the phosphoglycerate kinase family. In terms of assembly, monomer.

The protein localises to the cytoplasm. It carries out the reaction (2R)-3-phosphoglycerate + ATP = (2R)-3-phospho-glyceroyl phosphate + ADP. It functions in the pathway carbohydrate degradation; glycolysis; pyruvate from D-glyceraldehyde 3-phosphate: step 2/5. This Staphylococcus saprophyticus subsp. saprophyticus (strain ATCC 15305 / DSM 20229 / NCIMB 8711 / NCTC 7292 / S-41) protein is Phosphoglycerate kinase.